The following is a 359-amino-acid chain: Peptide chain release factor 1 (359 aa).

Gln-236 is subject to N5-methylglutamine.

This sequence belongs to the prokaryotic/mitochondrial release factor family. Post-translationally, methylated by PrmC. Methylation increases the termination efficiency of RF1.

The protein localises to the cytoplasm. In terms of biological role, peptide chain release factor 1 directs the termination of translation in response to the peptide chain termination codons UAG and UAA. This Streptococcus agalactiae protein is Peptide chain release factor 1.